We begin with the raw amino-acid sequence, 450 residues long: N-lysine methyltransferase SETD6 (450 aa).

Residues 1–10 (MATQAKRRRV) are compositionally biased toward basic residues. The segment at 1–20 (MATQAKRRRVAGPAGSDDDP) is disordered. Residues 39–263 (PKVAVSRQGT…KGHEIFNTYG (225 aa)) enclose the SET domain. Position 40 is an N6-methylated lysine; by autocatalysis (lysine 40). S-adenosyl-L-methionine is bound at residue 50–52 (AGY). Substrate is bound at residue tryptophan 99. Lysine 156 is subject to N6-methylated lysine; by autocatalysis. Tyrosine 200 contributes to the S-adenosyl-L-methionine binding site. Residues serine 201 and glutamine 203 each coordinate substrate. Residues 228 to 229 (NH) and tyrosine 274 contribute to the S-adenosyl-L-methionine site. Lysine 349 bears the N6-methylated lysine; by autocatalysis mark.

This sequence belongs to the class V-like SAM-binding methyltransferase superfamily. Histone-lysine methyltransferase family. SETD6 subfamily. As to quaternary structure, monomer, homodimer and homotrimer; these structures are stabilized in the presence of S-adenosyl-L-methionine (SAM). Post-translationally, automethylated.

The protein localises to the nucleus. It carries out the reaction L-lysyl-[protein] + S-adenosyl-L-methionine = N(6)-methyl-L-lysyl-[protein] + S-adenosyl-L-homocysteine + H(+). It catalyses the reaction L-lysyl(8)-[histone H2AZ] + S-adenosyl-L-methionine = N(6)-methyl-L-lysyl(8)-[histone H2AZ] + S-adenosyl-L-homocysteine + H(+). Protein-lysine N-methyltransferase. Monomethylates 'Lys-310' of the RELA subunit of NF-kappa-B complex, leading to down-regulation of NF-kappa-B transcription factor activity. Monomethylates 'Lys-8' of H2AZ (H2AZK8me1). Required for the maintenance of embryonic stem cell self-renewal. Methylates PAK4. This Bos taurus (Bovine) protein is N-lysine methyltransferase SETD6 (SETD6).